The chain runs to 509 residues: Maturase K (509 aa).

It belongs to the intron maturase 2 family. MatK subfamily.

It is found in the plastid. Its subcellular location is the chloroplast. Usually encoded in the trnK tRNA gene intron. Probably assists in splicing its own and other chloroplast group II introns. This is Maturase K from Schlumbergera truncata (Thanksgiving cactus).